A 900-amino-acid chain; its full sequence is Chaperone protein ClpB 2 (900 aa).

Residues 15-154 (PDRFSDPAWE…ESLLRQPSVS (140 aa)) enclose the Clp R domain. 2 repeat regions span residues 18 to 81 (FSDP…LADQ) and 91 to 154 (IGED…PSVS). The tract at residues 151–183 (PSVSPAPAPPPVPTAASAPAPTPRSAPAPRVMA) is disordered. The span at 154 to 163 (SPAPAPPPVP) shows a compositional bias: pro residues. The NBD1 stretch occupies residues 191 to 376 (ELEREPSALE…RRFQQVLIRE (186 aa)). Position 244–251 (244–251 (GEPGVGKT)) interacts with ATP. The tract at residues 377 to 581 (PDLELSLEIL…IADLVARWTG (205 aa)) is linker. Residues 427-557 (IDLIDEAAAQ…LEASQAEAQS (131 aa)) adopt a coiled-coil conformation. The NBD2 stretch occupies residues 591–803 (ERRKLLALES…RIDEVIRFRP (213 aa)). 641–648 (GPTGVGKT) is a binding site for ATP. The tract at residues 804 to 900 (LKVKDLVRIV…GASLEFEPLE (97 aa)) is C-terminal.

It belongs to the ClpA/ClpB family. In terms of assembly, homohexamer. The oligomerization is ATP-dependent.

Its subcellular location is the cytoplasm. Part of a stress-induced multi-chaperone system, it is involved in the recovery of the cell from heat-induced damage, in cooperation with DnaK, DnaJ and GrpE. Acts before DnaK, in the processing of protein aggregates. Protein binding stimulates the ATPase activity; ATP hydrolysis unfolds the denatured protein aggregates, which probably helps expose new hydrophobic binding sites on the surface of ClpB-bound aggregates, contributing to the solubilization and refolding of denatured protein aggregates by DnaK. This chain is Chaperone protein ClpB 2 (clpB2), found in Parasynechococcus marenigrum (strain WH8102).